Reading from the N-terminus, the 282-residue chain is E3 ubiquitin-protein ligase SIAH1B (282 aa).

Positions 1–17 (MSRQAATALSTGTSKCP) are enriched in polar residues. The segment at 1–23 (MSRQAATALSTGTSKCPPSQRVP) is disordered. Residue Ser19 is modified to Phosphoserine; by ATM and ATR. The RING-type zinc finger occupies 41 to 76 (CPVCFDYVLPPILQCQSGHLVCSNCRPKLTCCPTCR). Residues 90–282 (VANSVLFPCK…LGINVTISMC (193 aa)) form an SBD region. Residues 93–153 (SVLFPCKYSA…VMPHLMHQHK (61 aa)) form an SIAH-type zinc finger. Cys98, Cys105, His117, Cys121, Cys128, Cys135, His147, and His152 together coordinate Zn(2+).

This sequence belongs to the SINA (Seven in absentia) family. As to quaternary structure, homodimer. Post-translationally, phosphorylated on Ser-19 by ATM and ATR. Widely expressed at low level in embryos and adults. Due to the high similarity between SIAH1A and SIAH1B, it is difficult to distinguish its own tissue specificity. Overexpressed in endothelial cells of adult lung.

It is found in the cytoplasm. Its subcellular location is the nucleus. The enzyme catalyses S-ubiquitinyl-[E2 ubiquitin-conjugating enzyme]-L-cysteine + [acceptor protein]-L-lysine = [E2 ubiquitin-conjugating enzyme]-L-cysteine + N(6)-ubiquitinyl-[acceptor protein]-L-lysine.. It participates in protein modification; protein ubiquitination. Functionally, E3 ubiquitin-protein ligase that mediates ubiquitination and subsequent proteasomal degradation of target proteins. E3 ubiquitin ligases accept ubiquitin from an E2 ubiquitin-conjugating enzyme in the form of a thioester and then directly transfers the ubiquitin to targeted substrates. Mediates E3 ubiquitin ligase activity either through direct binding to substrates or by functioning as the essential RING domain subunit of larger E3 complexes. The chain is E3 ubiquitin-protein ligase SIAH1B (Siah1b) from Mus musculus (Mouse).